Reading from the N-terminus, the 320-residue chain is Acetyl-coenzyme A carboxylase carboxyl transferase subunit alpha (320 aa).

A CoA carboxyltransferase C-terminal domain is found at 42-295; sequence IEEKALAALT…GDAIAKSFAD (254 aa).

The protein belongs to the AccA family. Acetyl-CoA carboxylase is a heterohexamer composed of biotin carboxyl carrier protein (AccB), biotin carboxylase (AccC) and two subunits each of ACCase subunit alpha (AccA) and ACCase subunit beta (AccD).

The protein resides in the cytoplasm. It carries out the reaction N(6)-carboxybiotinyl-L-lysyl-[protein] + acetyl-CoA = N(6)-biotinyl-L-lysyl-[protein] + malonyl-CoA. It functions in the pathway lipid metabolism; malonyl-CoA biosynthesis; malonyl-CoA from acetyl-CoA: step 1/1. Component of the acetyl coenzyme A carboxylase (ACC) complex. First, biotin carboxylase catalyzes the carboxylation of biotin on its carrier protein (BCCP) and then the CO(2) group is transferred by the carboxyltransferase to acetyl-CoA to form malonyl-CoA. The protein is Acetyl-coenzyme A carboxylase carboxyl transferase subunit alpha of Rhodopseudomonas palustris (strain BisA53).